The following is a 477-amino-acid chain: Glycogen synthase 1 (477 aa).

Lys15 lines the ADP-alpha-D-glucose pocket.

This sequence belongs to the glycosyltransferase 1 family. Bacterial/plant glycogen synthase subfamily.

It carries out the reaction [(1-&gt;4)-alpha-D-glucosyl](n) + ADP-alpha-D-glucose = [(1-&gt;4)-alpha-D-glucosyl](n+1) + ADP + H(+). Its pathway is glycan biosynthesis; glycogen biosynthesis. Synthesizes alpha-1,4-glucan chains using ADP-glucose. This chain is Glycogen synthase 1 (glgA1), found in Synechocystis sp. (strain ATCC 27184 / PCC 6803 / Kazusa).